Here is a 533-residue protein sequence, read N- to C-terminus: Calcineurin-interacting protein 3 (533 aa).

Disordered stretches follow at residues Met1 to Ile30, Pro53 to Arg85, and Met359 to Pro404. Residues Lys61–Arg85 show a composition bias toward basic and acidic residues. The span at Met359–Ser372 shows a compositional bias: polar residues. Residues Pro373–Ile384 are compositionally biased toward basic and acidic residues.

Its subcellular location is the nucleus. The sequence is that of Calcineurin-interacting protein 3 from Caenorhabditis elegans.